A 128-amino-acid chain; its full sequence is Fluoride-specific ion channel FluC (128 aa).

The next 4 helical transmembrane spans lie at 3 to 23, 33 to 53, 69 to 89, and 99 to 119; these read LYAL…RWWF, TLPL…GAAI, FAIT…AETV, and WTFV…ILGI. Residues G76 and T79 each contribute to the Na(+) site.

Belongs to the fluoride channel Fluc/FEX (TC 1.A.43) family.

The protein localises to the cell inner membrane. The catalysed reaction is fluoride(in) = fluoride(out). Na(+) is not transported, but it plays an essential structural role and its presence is essential for fluoride channel function. Fluoride-specific ion channel. Important for reducing fluoride concentration in the cell, thus reducing its toxicity. This chain is Fluoride-specific ion channel FluC, found in Nitrosospira multiformis (strain ATCC 25196 / NCIMB 11849 / C 71).